Here is a 266-residue protein sequence, read N- to C-terminus: Pyridoxal phosphate phosphatase YigL (266 aa).

The active-site Nucleophile is the Asp-8. A Mg(2+)-binding site is contributed by Asp-8. Leu-9 serves as a coordination point for phosphate. Asp-10 contributes to the Mg(2+) binding site. Residues 42–43 (TG) and Lys-191 contribute to the phosphate site. Position 214 (Asp-214) interacts with Mg(2+). Asn-217 contributes to the phosphate binding site.

Belongs to the HAD-like hydrolase superfamily. Cof family. The cofactor is Mg(2+). Mn(2+) serves as cofactor. Co(2+) is required as a cofactor. It depends on Zn(2+) as a cofactor.

It catalyses the reaction pyridoxal 5'-phosphate + H2O = pyridoxal + phosphate. The enzyme catalyses sugar phosphate + H2O = sugar + phosphate.. Its function is as follows. Catalyzes the dephosphorylation of pyridoxal-phosphate (PLP) and sugar phosphate. This is Pyridoxal phosphate phosphatase YigL (yigL) from Escherichia coli O157:H7.